Consider the following 256-residue polypeptide: Small ribosomal subunit protein uS2 (256 aa).

It belongs to the universal ribosomal protein uS2 family.

This is Small ribosomal subunit protein uS2 from Streptococcus equi subsp. equi (strain 4047).